A 274-amino-acid chain; its full sequence is 2-dehydro-3-deoxyphosphooctonate aldolase (274 aa).

This sequence belongs to the KdsA family.

It is found in the cytoplasm. It carries out the reaction D-arabinose 5-phosphate + phosphoenolpyruvate + H2O = 3-deoxy-alpha-D-manno-2-octulosonate-8-phosphate + phosphate. It participates in carbohydrate biosynthesis; 3-deoxy-D-manno-octulosonate biosynthesis; 3-deoxy-D-manno-octulosonate from D-ribulose 5-phosphate: step 2/3. Its pathway is bacterial outer membrane biogenesis; lipopolysaccharide biosynthesis. This is 2-dehydro-3-deoxyphosphooctonate aldolase from Rickettsia bellii (strain OSU 85-389).